A 450-amino-acid chain; its full sequence is MLKNNEILETISMIKEQNLDVRTITLGLSLMDCACEDVKVLSEKIYDKITKTAENLVKTGENIEKRFGIPIINKRISVTPISIVAASCNCNSYLSIAKAMDKAAKEVGVDFIGGFSALVHKGFTESDLKLIKSLPESLANTDIVCSSVNIGSTRYGINMDAVKLMGETIKETSLITPDGFGCAKLVVFCNAVEDNPFMAGAFHGVGEAEKVINVGVSGPGVVKKALEEVRGKSFEEVAETIKKTSFKVTRMGQLVAKEASKLMDIPFGIVDLSLAPTPAVGDSVGRVLEEMGLSNCGTHGTTAALALLNDAVKKGGLMASSYVGGLSGAFIPVSEDECMIEQSKNGFLTIEKLEAMTCVCSVGLDMIAIPGKTSASTISGIIADEAAIGMINNKTTAVRIIPVPNKDIGDIVEFGGLLGSAPIMRVSPGNCDDFISRGGRIPAPVHSLKN.

It belongs to the UPF0210 family. In terms of assembly, homodimer.

The protein is UPF0210 protein CPE1497 of Clostridium perfringens (strain 13 / Type A).